The following is a 343-amino-acid chain: L-threonine 3-dehydrogenase (343 aa).

C38 contributes to the Zn(2+) binding site. Residues T40 and H43 each act as charge relay system in the active site. Zn(2+)-binding residues include H63, E64, C93, C96, C99, and C107. NAD(+) contacts are provided by residues I175, D195, R200, 262 to 264, and 286 to 287; these read LGI and IY.

The protein belongs to the zinc-containing alcohol dehydrogenase family. As to quaternary structure, homotetramer. Zn(2+) is required as a cofactor.

The protein localises to the cytoplasm. It carries out the reaction L-threonine + NAD(+) = (2S)-2-amino-3-oxobutanoate + NADH + H(+). It participates in amino-acid degradation; L-threonine degradation via oxydo-reductase pathway; glycine from L-threonine: step 1/2. Catalyzes the NAD(+)-dependent oxidation of L-threonine to 2-amino-3-ketobutyrate. In Paraburkholderia phytofirmans (strain DSM 17436 / LMG 22146 / PsJN) (Burkholderia phytofirmans), this protein is L-threonine 3-dehydrogenase.